The sequence spans 226 residues: 2-C-methyl-D-erythritol 4-phosphate cytidylyltransferase (226 aa).

Belongs to the IspD/TarI cytidylyltransferase family. IspD subfamily.

The catalysed reaction is 2-C-methyl-D-erythritol 4-phosphate + CTP + H(+) = 4-CDP-2-C-methyl-D-erythritol + diphosphate. It participates in isoprenoid biosynthesis; isopentenyl diphosphate biosynthesis via DXP pathway; isopentenyl diphosphate from 1-deoxy-D-xylulose 5-phosphate: step 2/6. Its function is as follows. Catalyzes the formation of 4-diphosphocytidyl-2-C-methyl-D-erythritol from CTP and 2-C-methyl-D-erythritol 4-phosphate (MEP). The sequence is that of 2-C-methyl-D-erythritol 4-phosphate cytidylyltransferase from Bacillus mycoides (strain KBAB4) (Bacillus weihenstephanensis).